The primary structure comprises 58 residues: UPF0391 membrane protein Maqu_2901 (58 aa).

Helical transmembrane passes span W4–A24 and A28–V48.

Belongs to the UPF0391 family.

The protein localises to the cell membrane. The protein is UPF0391 membrane protein Maqu_2901 of Marinobacter nauticus (strain ATCC 700491 / DSM 11845 / VT8) (Marinobacter aquaeolei).